A 544-amino-acid chain; its full sequence is Chaperonin GroEL (544 aa).

Residues 30 to 33 (TLGP), Lys51, 87 to 91 (DGTTT), Gly415, 479 to 481 (NAA), and Asp495 contribute to the ATP site.

Belongs to the chaperonin (HSP60) family. As to quaternary structure, forms a cylinder of 14 subunits composed of two heptameric rings stacked back-to-back. Interacts with the co-chaperonin GroES.

It localises to the cytoplasm. It catalyses the reaction ATP + H2O + a folded polypeptide = ADP + phosphate + an unfolded polypeptide.. In terms of biological role, together with its co-chaperonin GroES, plays an essential role in assisting protein folding. The GroEL-GroES system forms a nano-cage that allows encapsulation of the non-native substrate proteins and provides a physical environment optimized to promote and accelerate protein folding. The sequence is that of Chaperonin GroEL from Francisella tularensis subsp. mediasiatica (strain FSC147).